The chain runs to 208 residues: Outer-membrane lipoprotein carrier protein (208 aa).

The N-terminal stretch at 1-21 is a signal peptide; it reads MKKLNTLLLVLGSLVATPSFA. The interval 188-208 is disordered; it reads KSTFEFTPPEGVEIDDQSNGE. The segment covering 199–208 has biased composition (acidic residues); sequence VEIDDQSNGE.

Belongs to the LolA family. Monomer.

Its subcellular location is the periplasm. Its function is as follows. Participates in the translocation of lipoproteins from the inner membrane to the outer membrane. Only forms a complex with a lipoprotein if the residue after the N-terminal Cys is not an aspartate (The Asp acts as a targeting signal to indicate that the lipoprotein should stay in the inner membrane). The chain is Outer-membrane lipoprotein carrier protein from Pseudoalteromonas translucida (strain TAC 125).